The primary structure comprises 132 residues: ATP synthase epsilon chain (132 aa).

Belongs to the ATPase epsilon chain family. As to quaternary structure, F-type ATPases have 2 components, CF(1) - the catalytic core - and CF(0) - the membrane proton channel. CF(1) has five subunits: alpha(3), beta(3), gamma(1), delta(1), epsilon(1). CF(0) has three main subunits: a, b and c.

It is found in the cell inner membrane. Produces ATP from ADP in the presence of a proton gradient across the membrane. The chain is ATP synthase epsilon chain from Cereibacter sphaeroides (strain ATCC 17025 / ATH 2.4.3) (Rhodobacter sphaeroides).